A 608-amino-acid chain; its full sequence is Chaperone protein HtpG (608 aa).

Residues 1-332 (MQFQTEVNQL…VEDLPLNVSR (332 aa)) are a; substrate-binding. A b region spans residues 333–536 (EILQENQILK…KNKPDFAMQQ (204 aa)). Residues 537 to 608 (LLKQMGQEQN…LTKIINKAFS (72 aa)) are c.

This sequence belongs to the heat shock protein 90 family. In terms of assembly, homodimer.

It localises to the cytoplasm. Molecular chaperone. Has ATPase activity. The chain is Chaperone protein HtpG from Campylobacter jejuni subsp. jejuni serotype O:2 (strain ATCC 700819 / NCTC 11168).